Reading from the N-terminus, the 175-residue chain is Shikimate kinase (175 aa).

ATP is bound at residue G12–S19.

It belongs to the shikimate kinase family.

It is found in the cytoplasm. The catalysed reaction is shikimate + ATP = 3-phosphoshikimate + ADP + H(+). It participates in metabolic intermediate biosynthesis; chorismate biosynthesis; chorismate from D-erythrose 4-phosphate and phosphoenolpyruvate: step 5/7. The polypeptide is Shikimate kinase (Nitratidesulfovibrio vulgaris (strain ATCC 29579 / DSM 644 / CCUG 34227 / NCIMB 8303 / VKM B-1760 / Hildenborough) (Desulfovibrio vulgaris)).